Consider the following 116-residue polypeptide: Phosphoribosyl-AMP cyclohydrolase (116 aa).

Aspartate 81 provides a ligand contact to Mg(2+). Cysteine 82 is a Zn(2+) binding site. Mg(2+) contacts are provided by aspartate 83 and aspartate 85. 2 residues coordinate Zn(2+): cysteine 98 and cysteine 105.

This sequence belongs to the PRA-CH family. Homodimer. The cofactor is Mg(2+). Requires Zn(2+) as cofactor.

It localises to the cytoplasm. The enzyme catalyses 1-(5-phospho-beta-D-ribosyl)-5'-AMP + H2O = 1-(5-phospho-beta-D-ribosyl)-5-[(5-phospho-beta-D-ribosylamino)methylideneamino]imidazole-4-carboxamide. Its pathway is amino-acid biosynthesis; L-histidine biosynthesis; L-histidine from 5-phospho-alpha-D-ribose 1-diphosphate: step 3/9. Functionally, catalyzes the hydrolysis of the adenine ring of phosphoribosyl-AMP. The protein is Phosphoribosyl-AMP cyclohydrolase of Mycolicibacterium vanbaalenii (strain DSM 7251 / JCM 13017 / BCRC 16820 / KCTC 9966 / NRRL B-24157 / PYR-1) (Mycobacterium vanbaalenii).